The chain runs to 158 residues: NAD(P)H-quinone oxidoreductase subunit J, chloroplastic (158 aa).

Belongs to the complex I 30 kDa subunit family. As to quaternary structure, NDH is composed of at least 16 different subunits, 5 of which are encoded in the nucleus.

Its subcellular location is the plastid. It localises to the chloroplast thylakoid membrane. The catalysed reaction is a plastoquinone + NADH + (n+1) H(+)(in) = a plastoquinol + NAD(+) + n H(+)(out). The enzyme catalyses a plastoquinone + NADPH + (n+1) H(+)(in) = a plastoquinol + NADP(+) + n H(+)(out). Functionally, NDH shuttles electrons from NAD(P)H:plastoquinone, via FMN and iron-sulfur (Fe-S) centers, to quinones in the photosynthetic chain and possibly in a chloroplast respiratory chain. The immediate electron acceptor for the enzyme in this species is believed to be plastoquinone. Couples the redox reaction to proton translocation, and thus conserves the redox energy in a proton gradient. The polypeptide is NAD(P)H-quinone oxidoreductase subunit J, chloroplastic (Nymphaea alba (White water-lily)).